The chain runs to 995 residues: MAGVQKRKRDLEDQDDNGSEEDDIAFDIANEIALNDSESDANDSDSEVEADYGPNDVQDVIEYSSDEEEGVNNKKKAENKDIKKKKNSKKEIAAFPMLEMSDDENNASGKTQTGDDEDDVNEYFSTNNLEKTKHKKGSFPSFGLSKIVLNNIKRKGFRQPTPIQRKTIPLILQSRDIVGMARTGSGKTAAFILPMVEKLKSHSGKIGARAVILSPSRELAMQTFNVFKDFARGTELRSVLLTGGDSLEEQFGMMMTNPDVIIATPGRFLHLKVEMNLDLKSVEYVVFDEADRLFEMGFQEQLNELLASLPTTRQTLLFSATLPNSLVDFVKAGLVNPVLVRLDAETKVSENLEMLFLSSKNADREANLLYILQEIIKIPLATSEQLQKLQNSNNEADSDSDDENDRQKKRRNFKKEKFRKQKMPAANELPSEKATILFVPTRHHVEYISQLLRDCGYLISYIYGTLDQHARKRQLYNFRAGLTSILVVTDVAARGVDIPMLANVINYTLPGSSKIFVHRVGRTARAGNKGWAYSIVAENELPYLLDLELFLGEKILLTPMYDSLVDVMKKRWIDEGKPEYQFQPPKLSYTKRLVLGSCPRLDVEGLGDLYKNLMSSNFDLQLAKKTAMKAEKLYYRTRTSASPESLKRSKEIISSGWDAQNAFFGKNEEKEKLDFLAKLQNRRNKETVFEFTRNPDDEMAVFMKRRRKQLAPIQRKATERRELLEKERMAGLSHSIEDEILKGDDGETGYTVSEDALKEFEDADQLLEAQENENKKKKKPKSFKDPTFFLSHYAPAGEIQDKQLQITNGFANDAAQAAYDLNSDDKVQVHKQTATVKWDKKRKKYVNTQGIDNKKYIIGESGQKIAASFRSGRFDDWSKARNLKPLKVGSRETSIPSNLLEDPSQGPAANGRTVRGKFKHKQMKAPKMPDKHRDNYYSQKKKVEKALQSGISVKGYNNAPGLRSELKSTEQIRKDRIIAEKKRAKNARPSKKRKF.

The tract at residues 1 to 120 (MAGVQKRKRD…TQTGDDEDDV (120 aa)) is disordered. 2 stretches are compositionally biased toward acidic residues: residues 12–25 (EDQDDNGSEEDDIA) and 37–50 (SESDANDSDSEVEA). The segment covering 71–81 (VNNKKKAENKD) has biased composition (basic and acidic residues). Residue serine 101 is modified to Phosphoserine. Positions 137–165 (GSFPSFGLSKIVLNNIKRKGFRQPTPIQR) match the Q motif motif. The 173-residue stretch at 168-340 (IPLILQSRDI…KAGLVNPVLV (173 aa)) folds into the Helicase ATP-binding domain. 181–188 (ARTGSGKT) provides a ligand contact to ATP. Residues 288–291 (DEAD) carry the DEAD box motif. Disordered regions lie at residues 389 to 427 (LQNSNNEADSDSDDENDRQKKRRNFKKEKFRKQKMPAAN) and 889 to 973 (GSRE…EQIR). Phosphoserine is present on residues serine 398 and serine 400. 2 stretches are compositionally biased toward basic residues: residues 407 to 422 (QKKRRNFKKEKFRKQK) and 914 to 924 (VRGKFKHKQMK). The 151-residue stretch at 418-568 (FRKQKMPAAN…PMYDSLVDVM (151 aa)) folds into the Helicase C-terminal domain. The segment covering 964-973 (SELKSTEQIR) has biased composition (basic and acidic residues).

It belongs to the DEAD box helicase family. DDX54/DBP10 subfamily. In terms of assembly, interacts with RRP1 and associates with pre-ribosomal particles.

It is found in the nucleus. It localises to the nucleolus. It catalyses the reaction ATP + H2O = ADP + phosphate + H(+). In terms of biological role, ATP-binding RNA helicase involved in the biogenesis of 60S ribosomal subunits and is required for the normal formation of 25S and 5.8S rRNAs. In Saccharomyces cerevisiae (strain YJM789) (Baker's yeast), this protein is ATP-dependent RNA helicase DBP10 (DBP10).